The primary structure comprises 524 residues: Cytochrome P450 CYP749A22 (524 aa).

A helical membrane pass occupies residues threonine 12–isoleucine 32. Residue cysteine 472 participates in heme binding.

Belongs to the cytochrome P450 family. It depends on heme as a cofactor.

Its subcellular location is the membrane. Functionally, probable heme-thiolate monooxygenase. The polypeptide is Cytochrome P450 CYP749A22 (Panax ginseng (Korean ginseng)).